The sequence spans 339 residues: UPF0324 membrane protein M6_Spy0799 (339 aa).

Transmembrane regions (helical) follow at residues 7-24, 28-50, 57-79, 84-106, 118-140, 150-172, 256-275, 290-307, and 314-336; these read KLPGLLLCLLLALPAWYL, FPIIGAPVFAILLGMLLALFYEH, GISFTSKYILQTAVVLLGFGLNL, AVGMQSLPIIISTIATALLVAYG, ATLVGVGSSICGGSAIAATAPVI, AISVIFLFNMLAALLFPSLGQLL, FILFFLLASLITTLMISLGV, FIVMAMAAIGLNTNLVKL, and AILLGAICWVAITLVSLAMQLSL.

The protein belongs to the UPF0324 family.

The protein resides in the cell membrane. The chain is UPF0324 membrane protein M6_Spy0799 from Streptococcus pyogenes serotype M6 (strain ATCC BAA-946 / MGAS10394).